The chain runs to 336 residues: UPF0324 membrane protein spr0034 (336 aa).

The next 8 helical transmembrane spans lie at 65–84 (LLQY…QVFA), 91–113 (PVIL…FFAL), 118–140 (ATLV…APVI), 153–175 (VIFF…LHLS), 211–233 (SATI…LSYW), 249–271 (VFPL…TSLG), 286–305 (FLIV…VAMV), and 312–334 (ILLG…TLIG).

This sequence belongs to the UPF0324 family.

It localises to the cell membrane. This is UPF0324 membrane protein spr0034 from Streptococcus pneumoniae (strain ATCC BAA-255 / R6).